The sequence spans 214 residues: Membrane antigen containing repeating peptides (214 aa).

Repeat copies occupy residues 1–14 (QETSAKLADTEETL), 15–28 (QETSAKLADTEETL), 29–42 (QETSAKLADTEETL), and 43–56 (QETSAKLADTEETL). A disordered region spans residues 1–31 (QETSAKLADTEETLQETSAKLADTEETLQET). The 4 X 14 AA tandem repeats stretch occupies residues 1-56 (QETSAKLADTEETLQETSAKLADTEETLQETSAKLADTEETLQETSAKLADTEETL). The tract at residues 180–214 (CSLHPTPRRLGDVSNRENSIENKTRSASRLSGRLF) is disordered. Over residues 188–203 (RLGDVSNRENSIENKT) the composition is skewed to basic and acidic residues.

Its subcellular location is the membrane. The chain is Membrane antigen containing repeating peptides from Leishmania major.